The primary structure comprises 468 residues: Homocitrate synthase (468 aa).

Residues 11-266 (VGILDSTLRE…IEVVDLKKLS (256 aa)) form the Pyruvate carboxyltransferase domain. Arginine 19 contributes to the 2-oxoglutarate binding site. Glutamate 20 is a binding site for Mg(2+). 2-oxoglutarate-binding residues include histidine 83, arginine 143, and threonine 177. The Mg(2+) site is built by histidine 205 and histidine 207. Histidine 299 acts as the Proton acceptor in catalysis.

This sequence belongs to the alpha-IPM synthase/homocitrate synthase family. Homocitrate synthase LYS20/LYS21 subfamily. Mg(2+) is required as a cofactor. The cofactor is Mn(2+).

It carries out the reaction acetyl-CoA + 2-oxoglutarate + H2O = (2R)-homocitrate + CoA + H(+). Its pathway is amino-acid biosynthesis; L-lysine biosynthesis via AAA pathway; L-alpha-aminoadipate from 2-oxoglutarate: step 1/5. With respect to regulation, inhibited by lysine. Functionally, catalyzes the aldol-type condensation of 2-oxoglutarate with acetyl-CoA to yield homocitrate. Carries out the first step of the alpha-aminoadipate (AAA) lysine biosynthesis pathway. Does not display 2-isopropylmalate synthase and citramalate synthase activities since it cannot use 2-oxoisovalerate or pyruvate as substrate. The polypeptide is Homocitrate synthase (Sulfolobus acidocaldarius (strain ATCC 33909 / DSM 639 / JCM 8929 / NBRC 15157 / NCIMB 11770)).